We begin with the raw amino-acid sequence, 1058 residues long: Carbamoyl phosphate synthase large chain (1058 aa).

A carboxyphosphate synthetic domain region spans residues M1–E401. Positions 129, 169, 175, 176, 208, 210, 215, 241, 242, 243, 284, and 298 each coordinate ATP. The 195-residue stretch at K133–V327 folds into the ATP-grasp 1 domain. The Mg(2+) site is built by Q284, E298, and N300. Mn(2+)-binding residues include Q284, E298, and N300. The interval I402–S546 is oligomerization domain. The carbamoyl phosphate synthetic domain stretch occupies residues I547–Y929. Positions E671–L861 constitute an ATP-grasp 2 domain. R707, S746, I748, E752, G777, V778, H779, S780, Q820, and E832 together coordinate ATP. Residues Q820, E832, and N834 each contribute to the Mg(2+) site. Residues Q820, E832, and N834 each coordinate Mn(2+). The MGS-like domain maps to L930–I1058. The interval L930–I1058 is allosteric domain.

Belongs to the CarB family. As to quaternary structure, composed of two chains; the small (or glutamine) chain promotes the hydrolysis of glutamine to ammonia, which is used by the large (or ammonia) chain to synthesize carbamoyl phosphate. Tetramer of heterodimers (alpha,beta)4. The cofactor is Mg(2+). Mn(2+) serves as cofactor.

The enzyme catalyses hydrogencarbonate + L-glutamine + 2 ATP + H2O = carbamoyl phosphate + L-glutamate + 2 ADP + phosphate + 2 H(+). It carries out the reaction hydrogencarbonate + NH4(+) + 2 ATP = carbamoyl phosphate + 2 ADP + phosphate + 2 H(+). The protein operates within amino-acid biosynthesis; L-arginine biosynthesis; carbamoyl phosphate from bicarbonate: step 1/1. Its pathway is pyrimidine metabolism; UMP biosynthesis via de novo pathway; (S)-dihydroorotate from bicarbonate: step 1/3. Large subunit of the glutamine-dependent carbamoyl phosphate synthetase (CPSase). CPSase catalyzes the formation of carbamoyl phosphate from the ammonia moiety of glutamine, carbonate, and phosphate donated by ATP, constituting the first step of 2 biosynthetic pathways, one leading to arginine and/or urea and the other to pyrimidine nucleotides. The large subunit (synthetase) binds the substrates ammonia (free or transferred from glutamine from the small subunit), hydrogencarbonate and ATP and carries out an ATP-coupled ligase reaction, activating hydrogencarbonate by forming carboxy phosphate which reacts with ammonia to form carbamoyl phosphate. This is Carbamoyl phosphate synthase large chain from Streptococcus pneumoniae (strain 70585).